A 280-amino-acid polypeptide reads, in one-letter code: 2-dehydro-3-deoxyphosphooctonate aldolase (280 aa).

This sequence belongs to the KdsA family.

It localises to the cytoplasm. It carries out the reaction D-arabinose 5-phosphate + phosphoenolpyruvate + H2O = 3-deoxy-alpha-D-manno-2-octulosonate-8-phosphate + phosphate. The protein operates within carbohydrate biosynthesis; 3-deoxy-D-manno-octulosonate biosynthesis; 3-deoxy-D-manno-octulosonate from D-ribulose 5-phosphate: step 2/3. Its pathway is bacterial outer membrane biogenesis; lipopolysaccharide biosynthesis. The polypeptide is 2-dehydro-3-deoxyphosphooctonate aldolase (Colwellia psychrerythraea (strain 34H / ATCC BAA-681) (Vibrio psychroerythus)).